A 607-amino-acid polypeptide reads, in one-letter code: Elongation factor 4 (607 aa).

In terms of domain architecture, tr-type G spans 11-193 (KNIRNFSIIA…KIVEVVPPPE (183 aa)). GTP contacts are provided by residues 23 to 28 (DHGKST) and 140 to 143 (NKID).

It belongs to the TRAFAC class translation factor GTPase superfamily. Classic translation factor GTPase family. LepA subfamily.

Its subcellular location is the cell membrane. The catalysed reaction is GTP + H2O = GDP + phosphate + H(+). Its function is as follows. Required for accurate and efficient protein synthesis under certain stress conditions. May act as a fidelity factor of the translation reaction, by catalyzing a one-codon backward translocation of tRNAs on improperly translocated ribosomes. Back-translocation proceeds from a post-translocation (POST) complex to a pre-translocation (PRE) complex, thus giving elongation factor G a second chance to translocate the tRNAs correctly. Binds to ribosomes in a GTP-dependent manner. The protein is Elongation factor 4 of Staphylococcus saprophyticus subsp. saprophyticus (strain ATCC 15305 / DSM 20229 / NCIMB 8711 / NCTC 7292 / S-41).